Consider the following 282-residue polypeptide: 5'-nucleotidase SurE (282 aa).

Asp12, Asp13, Ser43, and Asn98 together coordinate a divalent metal cation.

The protein belongs to the SurE nucleotidase family. A divalent metal cation serves as cofactor.

It localises to the cytoplasm. The enzyme catalyses a ribonucleoside 5'-phosphate + H2O = a ribonucleoside + phosphate. Nucleotidase that shows phosphatase activity on nucleoside 5'-monophosphates. The sequence is that of 5'-nucleotidase SurE from Hyperthermus butylicus (strain DSM 5456 / JCM 9403 / PLM1-5).